We begin with the raw amino-acid sequence, 175 residues long: MEKKRRARINLSLEQLRSLLERHYSHQIRKRKLEKADILELSVKYVRSLQNSLQGLWLVPSGVDYPSGFRGGLPGSSQRLRPGEDDSGLRCPLLLQRRAGSTTDSANPQTASVLSPCLPAIWAPGPPAGGSQSPQSPFPPLGGLLESSTGILAPPPASNCQAENPRPGFRVWRPW.

One can recognise a bHLH domain in the interval 1-49; it reads MEKKRRARINLSLEQLRSLLERHYSHQIRKRKLEKADILELSVKYVRSL. Residues 65–98 form the Orange domain; it reads YPSGFRGGLPGSSQRLRPGEDDSGLRCPLLLQRR. The span at 124 to 145 shows a compositional bias: low complexity; the sequence is PGPPAGGSQSPQSPFPPLGGLL. The tract at residues 124 to 175 is disordered; sequence PGPPAGGSQSPQSPFPPLGGLLESSTGILAPPPASNCQAENPRPGFRVWRPW. Positions 172 to 175 match the WRPW motif motif; that stretch reads WRPW.

Transcription repression requires formation of a complex with a corepressor protein of the Groucho/TLE family. Expressed exclusively in Purkinje cells.

The protein localises to the nucleus. Its function is as follows. Transcriptional repressor of genes that require a bHLH protein for their transcription. The chain is Transcription factor HES-3 (Hes3) from Rattus norvegicus (Rat).